The sequence spans 258 residues: Cell division protein ZapD (258 aa).

This sequence belongs to the ZapD family. As to quaternary structure, interacts with FtsZ.

Its subcellular location is the cytoplasm. Cell division factor that enhances FtsZ-ring assembly. Directly interacts with FtsZ and promotes bundling of FtsZ protofilaments, with a reduction in FtsZ GTPase activity. This chain is Cell division protein ZapD, found in Coxiella burnetii (strain RSA 331 / Henzerling II).